We begin with the raw amino-acid sequence, 105 residues long: Flagellar transcriptional regulator FlhD (105 aa).

Belongs to the FlhD family. In terms of assembly, homodimer; disulfide-linked. Forms a heterohexamer composed of two FlhC and four FlhD subunits. Each FlhC binds a FlhD dimer, forming a heterotrimer, and a hexamer assembles by dimerization of two heterotrimers.

The protein resides in the cytoplasm. Functionally, functions in complex with FlhC as a master transcriptional regulator that regulates transcription of several flagellar and non-flagellar operons by binding to their promoter region. Activates expression of class 2 flagellar genes, including fliA, which is a flagellum-specific sigma factor that turns on the class 3 genes. Also regulates genes whose products function in a variety of physiological pathways. The polypeptide is Flagellar transcriptional regulator FlhD (Nitrosomonas eutropha (strain DSM 101675 / C91 / Nm57)).